Consider the following 252-residue polypeptide: MSATELFARRATLARSVRLLSEFRFEQSDPARFYGALADDTAAMVADLWQAATETTPGGRTVLDVGGGPGFFAAAFARRGMEYVGVEPDPREMHAGPAAQAGGRYVRASGTSLPFADGSVDVCLSSNVAEHVPDPWRLGNEMVRVTRPGGLAVLSYTVWLGPFGGHEMGLTHYLGGARAADRYTRKHGHRPKNDYGSSLFAVSAHDGLEWAASTGALIAAFPRYHPRWAWWTNAVPGLREFVVSNQVLVLQP.

This sequence belongs to the methyltransferase superfamily.

This is an uncharacterized protein from Mycobacterium sp. (strain JLS).